Consider the following 120-residue polypeptide: Large ribosomal subunit protein bL12 (120 aa).

Belongs to the bacterial ribosomal protein bL12 family. As to quaternary structure, homodimer. Part of the ribosomal stalk of the 50S ribosomal subunit. Forms a multimeric L10(L12)X complex, where L10 forms an elongated spine to which 2 to 4 L12 dimers bind in a sequential fashion. Binds GTP-bound translation factors.

In terms of biological role, forms part of the ribosomal stalk which helps the ribosome interact with GTP-bound translation factors. Is thus essential for accurate translation. The sequence is that of Large ribosomal subunit protein bL12 from Clostridium botulinum (strain Alaska E43 / Type E3).